Here is a 319-residue protein sequence, read N- to C-terminus: Probable arabinan endo-1,5-alpha-L-arabinosidase A (319 aa).

Positions 1–19 (MYLQSSLALVLLRAAVVHG) are cleaved as a signal peptide. Asp-34 functions as the Proton acceptor in the catalytic mechanism. The N-linked (GlcNAc...) asparagine glycan is linked to Asn-53. Glu-198 serves as the catalytic Proton donor.

This sequence belongs to the glycosyl hydrolase 43 family.

It is found in the secreted. The catalysed reaction is Endohydrolysis of (1-&gt;5)-alpha-arabinofuranosidic linkages in (1-&gt;5)-arabinans.. It functions in the pathway glycan metabolism; L-arabinan degradation. Endo-1,5-alpha-L-arabinanase involved in degradation of pectin. Its preferred substrate is linear 1,5-alpha-L-arabinan. The chain is Probable arabinan endo-1,5-alpha-L-arabinosidase A (abnA) from Aspergillus flavus (strain ATCC 200026 / FGSC A1120 / IAM 13836 / NRRL 3357 / JCM 12722 / SRRC 167).